A 313-amino-acid chain; its full sequence is Ribose 1,5-bisphosphate isomerase (313 aa).

Residues 17–20 and R57 contribute to the substrate site; that span reads RGAA. Catalysis depends on C121, which acts as the Proton acceptor. The active-site Proton donor is D190. Residues 200-201 and K226 each bind substrate; that span reads NK.

This sequence belongs to the eIF-2B alpha/beta/delta subunits family. R15P isomerase subfamily.

The enzyme catalyses alpha-D-ribose 1,5-bisphosphate = D-ribulose 1,5-bisphosphate. Functionally, catalyzes the isomerization of ribose 1,5-bisphosphate (R15P) to ribulose 1,5-bisphosphate (RuBP), the CO(2) acceptor and substrate for RubisCO. Functions in an archaeal AMP degradation pathway, together with AMP phosphorylase and RubisCO. This Archaeoglobus fulgidus (strain ATCC 49558 / DSM 4304 / JCM 9628 / NBRC 100126 / VC-16) protein is Ribose 1,5-bisphosphate isomerase.